Here is a 166-residue protein sequence, read N- to C-terminus: Cofilin-2 (166 aa).

Ala2 is subject to N-acetylalanine. Phosphoserine is present on Ser3. One can recognise an ADF-H domain in the interval Gly4–Leu153. Phosphothreonine is present on Thr6. The short motif at Lys30 to Lys34 is the Nuclear localization signal element.

This sequence belongs to the actin-binding proteins ADF family. Post-translationally, the phosphorylation of Ser-24 may prevent recognition of the nuclear localization signal.

It is found in the nucleus matrix. The protein localises to the cytoplasm. Its subcellular location is the cytoskeleton. Controls reversibly actin polymerization and depolymerization in a pH-sensitive manner. It has the ability to bind G- and F-actin in a 1:1 ratio of cofilin to actin. It is the major component of intranuclear and cytoplasmic actin rods. The sequence is that of Cofilin-2 (CFL2) from Bos taurus (Bovine).